A 107-amino-acid chain; its full sequence is Small ribosomal subunit protein uS10m (107 aa).

This sequence belongs to the universal ribosomal protein uS10 family.

It localises to the mitochondrion. The sequence is that of Small ribosomal subunit protein uS10m (RPS10) from Prototheca wickerhamii.